The chain runs to 131 residues: Histone H2B.1 (131 aa).

Residues 1-20 are compositionally biased toward basic and acidic residues; it reads MAPPKAEKKPASKAPAEKKP. The tract at residues 1-39 is disordered; the sequence is MAPPKAEKKPASKAPAEKKPAAKKTASATDSKKRTKTRK. N6-acetyllysine; alternate occurs at positions 8 and 9. Glycyl lysine isopeptide (Lys-Gly) (interchain with G-Cter in SUMO); alternate cross-links involve residues Lys-8 and Lys-9. The residue at position 12 (Ser-12) is a Phosphoserine. Residue Lys-13 is modified to N6-acetyllysine. Lys-18 is modified (N6-acetyllysine; alternate). Lys-18 participates in a covalent cross-link: Glycyl lysine isopeptide (Lys-Gly) (interchain with G-Cter in SUMO); alternate. A Glycyl lysine isopeptide (Lys-Gly) (interchain with G-Cter in SUMO) cross-link involves residue Lys-19. A Glycyl lysine isopeptide (Lys-Gly) (interchain with G-Cter in ubiquitin) cross-link involves residue Lys-125.

It belongs to the histone H2B family. The nucleosome is a histone octamer containing two molecules each of H2A, H2B, H3 and H4 assembled in one H3-H4 heterotetramer and two H2A-H2B heterodimers. The octamer wraps approximately 147 bp of DNA. Monoubiquitinated to form H2BK123ub1. H2BK123ub1 gives a specific tag for epigenetic transcriptional activation and is also prerequisite for H3K4me and H3K79me formation. H2BK123ub1 also modulates the formation of double-strand breaks during meiosis and is a prerequisite for DNA-damage checkpoint activation. Post-translationally, phosphorylated by STE20 to form H2BS10ph during progression through meiotic prophase. May be correlated with chromosome condensation. In terms of processing, acetylated by GCN5 to form H2BK11ac and H2BK16ac. H2BK16ac can also be formed by ESA1. Acetylation of N-terminal lysines and particularly formation of H2BK11acK16ac has a positive effect on transcription. Sumoylation to form H2BK6su or H2BK7su, and probably also H2BK16su or H2BK17su, occurs preferentially near the telomeres and represses gene transcription.

It localises to the nucleus. It is found in the chromosome. Its function is as follows. Core component of nucleosome. Nucleosomes wrap and compact DNA into chromatin, limiting DNA accessibility to the cellular machineries which require DNA as a template. Histones thereby play a central role in transcription regulation, DNA repair, DNA replication and chromosomal stability. DNA accessibility is regulated via a complex set of post-translational modifications of histones, also called histone code, and nucleosome remodeling. The polypeptide is Histone H2B.1 (HTB1) (Scheffersomyces stipitis (strain ATCC 58785 / CBS 6054 / NBRC 10063 / NRRL Y-11545) (Yeast)).